The sequence spans 334 residues: G2/mitotic-specific cyclin-1 (334 aa).

It belongs to the cyclin family. Cyclin AB subfamily.

In terms of biological role, essential for the control of the cell cycle at the G2/M (mitosis) transition. The chain is G2/mitotic-specific cyclin-1 (CYC1) from Trypanosoma brucei brucei.